Consider the following 495-residue polypeptide: Glutamate--tRNA ligase 1 (495 aa).

The 'HIGH' region signature appears at 10–20; the sequence is PSPTGALHMGG. The 'KMSKS' region signature appears at 251 to 255; the sequence is KLSKR. K254 contributes to the ATP binding site.

It belongs to the class-I aminoacyl-tRNA synthetase family. Glutamate--tRNA ligase type 1 subfamily. In terms of assembly, monomer.

It localises to the cytoplasm. It catalyses the reaction tRNA(Glu) + L-glutamate + ATP = L-glutamyl-tRNA(Glu) + AMP + diphosphate. Catalyzes the attachment of glutamate to tRNA(Glu) in a two-step reaction: glutamate is first activated by ATP to form Glu-AMP and then transferred to the acceptor end of tRNA(Glu). The polypeptide is Glutamate--tRNA ligase 1 (Syntrophomonas wolfei subsp. wolfei (strain DSM 2245B / Goettingen)).